Here is a 381-residue protein sequence, read N- to C-terminus: Creatine kinase M-type (381 aa).

A Phosphagen kinase N-terminal domain is found at 11–98 (KLNYSAAEEF…FDPVIEDRHG (88 aa)). Residues 125-367 (YVLSSRVRTG…KLMVEMEKRL (243 aa)) enclose the Phosphagen kinase C-terminal domain. ATP is bound by residues 128 to 132 (SSRVR), histidine 191, arginine 236, arginine 292, 320 to 325 (RGTGGV), and aspartate 335.

The protein belongs to the ATP:guanido phosphotransferase family. As to quaternary structure, dimer of identical or non-identical chains. With MM being the major form in skeletal muscle and myocardium, MB existing in myocardium, and BB existing in many tissues, especially brain.

The protein localises to the cytoplasm. It carries out the reaction creatine + ATP = N-phosphocreatine + ADP + H(+). Reversibly catalyzes the transfer of phosphate between ATP and various phosphogens (e.g. creatine phosphate). Creatine kinase isoenzymes play a central role in energy transduction in tissues with large, fluctuating energy demands, such as skeletal muscle, heart, brain and spermatozoa. The polypeptide is Creatine kinase M-type (Torpedo marmorata (Marbled electric ray)).